The primary structure comprises 502 residues: MISKSSPLIFERSKKDRYAYSLPQNDIENISIASLLDDKYIRKHKAEFPEVSELDLVRHYTELSNKNFGVDTGFYPLGSCTMKYNPKINEKVARISGFSESHPLQEEEHVQGSLEIIYSLQEELKEITGMDEVTLQPAAGAHGEWTALMIFKAYHEKNGQSHRDEVIVPDSAHGTNPASASFAGFKSVTVKSNQRGEVDIEDLKRVVNDNTAAIMLTNPNTLGIFEQDIIEIGKIVHEAGGLLYYDGANLNAILDKVRPGDMGFDAVHLNLHKTFTGPHGGGGPGSGPVGVVEKLASYLPKPMVIKDNDRYKYDNDIPNSIGRVKPFYGNFGIYLRAYTYIRSMGANGLKEVSEAAVLNANYIKSRLKNHFEIPFNQYCKHEFVLSGTLQKQYGVRTLDMAKRLLDFGVHPPTIYFPLNVEEGMMIEPTETESKETLDYFIDAMIQIADETKNDPDKVLEAPHTTIIDRLDETTAARKPILKFEELKDEKYKEHTNIDSEDN.

K273 is subject to N6-(pyridoxal phosphate)lysine.

Belongs to the GcvP family. C-terminal subunit subfamily. In terms of assembly, the glycine cleavage system is composed of four proteins: P, T, L and H. In this organism, the P 'protein' is a heterodimer of two subunits. It depends on pyridoxal 5'-phosphate as a cofactor.

It catalyses the reaction N(6)-[(R)-lipoyl]-L-lysyl-[glycine-cleavage complex H protein] + glycine + H(+) = N(6)-[(R)-S(8)-aminomethyldihydrolipoyl]-L-lysyl-[glycine-cleavage complex H protein] + CO2. In terms of biological role, the glycine cleavage system catalyzes the degradation of glycine. The P protein binds the alpha-amino group of glycine through its pyridoxal phosphate cofactor; CO(2) is released and the remaining methylamine moiety is then transferred to the lipoamide cofactor of the H protein. This Staphylococcus epidermidis (strain ATCC 35984 / DSM 28319 / BCRC 17069 / CCUG 31568 / BM 3577 / RP62A) protein is Probable glycine dehydrogenase (decarboxylating) subunit 2.